Consider the following 205-residue polypeptide: Transcription termination/antitermination protein NusG (205 aa).

In terms of domain architecture, KOW spans 154–178; it reads GDHIMVLSGPFKDFEGDVIEVSPER.

Belongs to the NusG family.

Its function is as follows. Participates in transcription elongation, termination and antitermination. The protein is Transcription termination/antitermination protein NusG of Synechocystis sp. (strain ATCC 27184 / PCC 6803 / Kazusa).